The sequence spans 621 residues: MSATLQSFLPAPKYSALPHSRDDDENDEYDNTEAGPSTSSSSSALVSTSSPSIPPYGQRAAWRPRTQADYANGGAYPECHVAQYPLDMGRNRSAATSNKLAMRIDGEGNKRYDAIVKQSLRPGQTVQTEFKDLVPLSQRTDIKEKDRNSGFERPSHEEVMSNTERTRLALEAITKGKNKPVVPKAGNLPGQQQAAQFIRYTPAQQGAGNGTQRIIKMTEAQRDPLEPPRHRFKKTAAGPPSPPPPVLRSPPRKVTAQEQKDWMIPPAVSNWKNNKGYTIPLDKRLAADASGIQDVVINDNFAQFAEALHLADRHAREEVRQRSIMQQKLAAKEKAAKEEHLRNLAQRAREERAGVSSATPSVLGRDDDVASRLADSDARPTRATPRAEGGMSAMLAGYRSDSDSDESAASDEEDDEGARERDRIREERRRERQRELRMSNMGIEQRTKQLLREQNRDISEKVALGLAKPTASKESMTDSRLFNQGESLAAGYGDEDSYNLYDKPLFSGSSAAAAIYRRPAARGGANDIYSGADDTALEEELGKNDRFGLGQSKFRGVQGDADRDSGSGSAPVRSGPVQFEKDTSDPFAINQFLEDAKRGIKRTSDQDADDARKKLRDEHDS.

Disordered regions lie at residues 1 to 73 (MSAT…YANG), 137 to 164 (SQRTDIKEKDRNSGFERPSHEEVMSNTE), 220 to 251 (AQRDPLEPPRHRFKKTAAGPPSPPPPVLRSPP), 347 to 438 (RARE…ELRM), and 542 to 621 (GKND…EHDS). The span at 36–51 (PSTSSSSSALVSTSSP) shows a compositional bias: low complexity. 2 stretches are compositionally biased toward basic and acidic residues: residues 140-164 (TDIKEKDRNSGFERPSHEEVMSNTE) and 220-229 (AQRDPLEPPR). The span at 239–248 (PPSPPPPVLR) shows a compositional bias: pro residues. Over residues 364–380 (GRDDDVASRLADSDARP) the composition is skewed to basic and acidic residues. Residues 403–417 (DSDESAASDEEDDEG) show a composition bias toward acidic residues. Basic and acidic residues-rich tracts occupy residues 418–437 (ARERDRIREERRRERQRELR) and 594–621 (EDAKRGIKRTSDQDADDARKKLRDEHDS).

This sequence belongs to the SNW family. As to quaternary structure, associated with the spliceosome.

Its subcellular location is the nucleus. Functionally, involved in pre-mRNA splicing. The polypeptide is Pre-mRNA-processing protein 45 (PRP45) (Mycosarcoma maydis (Corn smut fungus)).